Consider the following 481-residue polypeptide: Deoxyribodipyrimidine photo-lyase (481 aa).

The Photolyase/cryptochrome alpha/beta domain occupies M1–H136. Position 228 (Y228) interacts with FAD. Residue R232 coordinates DNA. T240 to S244 contributes to the FAD binding site. 2 interaction with DNA regions span residues Q283 to Y290 and N349 to R350. FAD is bound at residue D380–D382. Residue Q412 coordinates DNA.

It belongs to the DNA photolyase class-1 family. Monomer. Requires FAD as cofactor. Coenzyme F420-(gamma-Glu)n is required as a cofactor.

It catalyses the reaction cyclobutadipyrimidine (in DNA) = 2 pyrimidine residues (in DNA).. Involved in repair of UV radiation-induced DNA damage. Catalyzes the light-dependent monomerization (300-600 nm) of cyclobutyl pyrimidine dimers (in cis-syn configuration), which are formed between adjacent bases on the same DNA strand upon exposure to ultraviolet radiation. The protein is Deoxyribodipyrimidine photo-lyase (phr) of Halobacterium salinarum (strain ATCC 700922 / JCM 11081 / NRC-1) (Halobacterium halobium).